Consider the following 701-residue polypeptide: E3 ubiquitin-protein ligase RNF19B (701 aa).

Positions 1–97 are disordered; that stretch reads MGSEKDSESP…PAEPLSTSQA (97 aa). The interval 1–304 is required for ubiquitin ligase activity and for protection against staurosporin-induced cell death; it reads MGSEKDSESP…VCGCEFCWLC (304 aa). The span at 57-72 shows a compositional bias: low complexity; sequence QQLHQQQQIQQQQLLQ. The segment at 103-323 is TRIAD supradomain; that stretch reads ELLECPLCLV…LSPSGCTFWG (221 aa). The Zn(2+) site is built by C107, C110, C130, C133, C194, C199, C216, C221, C226, C229, H234, C239, C273, and C276. The RING-type 1 zinc finger occupies 107–156; the sequence is CPLCLVRQPAEQLPELQGCSHRSCLCCLRQYLRIEITESRVQLSCPECAE. The IBR-type zinc-finger motif lies at 174–239; sequence EKYEEFLLRR…KQAWHPNQTC (66 aa). An RING-type 2; atypical zinc finger spans residues 273–304; sequence CPRCGAYIIKMNDGSCNHMTCAVCGCEFCWLC. Residue C288 is part of the active site. Zn(2+)-binding residues include C293, C296, C301, C304, H312, and C319. The next 2 membrane-spanning stretches (helical) occupy residues 340–360 and 396–416; these read LIGAPVGITLIAGIAVPAMVI and IITAPVIAAVSVGIGVPIMLA. Disordered stretches follow at residues 472 to 495 and 658 to 677; these read LEGAASGLSTTSPSEGLSVAPGGL and AELTSDDCDSPHPKSCHGAP.

The protein belongs to the RBR family. RNF19 subfamily. Interacts with UBE2L3, UBE2L6 and UCKL1.

The protein localises to the cytoplasmic granule membrane. It localises to the endoplasmic reticulum membrane. The catalysed reaction is [E2 ubiquitin-conjugating enzyme]-S-ubiquitinyl-L-cysteine + [acceptor protein]-L-lysine = [E2 ubiquitin-conjugating enzyme]-L-cysteine + [acceptor protein]-N(6)-ubiquitinyl-L-lysine.. It functions in the pathway protein modification; protein ubiquitination. In terms of biological role, E3 ubiquitin-protein ligase which accepts ubiquitin from E2 ubiquitin-conjugating enzymes UBE2L3 and UBE2L6 in the form of a thioester and then directly transfers the ubiquitin to targeted substrates, such as UCKL1. Involved in the cytolytic activity of natural killer cells and cytotoxic T-cells. Protects against staurosporin-induced cell death. The chain is E3 ubiquitin-protein ligase RNF19B (rnf19b) from Danio rerio (Zebrafish).